Consider the following 144-residue polypeptide: HTH-type transcriptional regulator MntR (144 aa).

The HTH dtxR-type domain maps to 1–63 (MTTPSMEDYI…YEKYRGLILT (63 aa)). Mn(2+)-binding residues include Asp8, Glu11, His77, Glu99, Glu102, and His103.

Belongs to the DtxR/MntR family. In terms of assembly, homodimer.

It is found in the cytoplasm. Its activity is regulated as follows. DNA binding is strongly activated by Mn(2+). Functionally, central regulator of manganese homeostasis. This is HTH-type transcriptional regulator MntR from Bacillus pumilus (strain SAFR-032).